The chain runs to 742 residues: Protein CdcH (742 aa).

ATP contacts are provided by residues 230-237 (GPPGTGKT) and 503-510 (GPPGTGKT). A disordered region spans residues 722–742 (FKGSQGPNVNSRQGSEHIGFQ). Over residues 723-734 (KGSQGPNVNSRQ) the composition is skewed to polar residues.

Belongs to the AAA ATPase family. CDC48 subfamily.

Functionally, may be part of a transduction pathway connecting light to cell division. This chain is Protein CdcH (cdcH), found in Halobacterium salinarum (strain ATCC 700922 / JCM 11081 / NRC-1) (Halobacterium halobium).